The sequence spans 744 residues: MAGRRAMRPSGSSMRGVVARLAAARSPAVSFLVAAAAGAALVGGVYFWLVVSSFRLPDSRAVGCLPDGEGSWAIGMYYGKSPLELRPIELEGRSNGNSSAWPVANPVLTCATPTEGGYPSNFVADPFLYVQGDTLFLFFETKTVSTMQGDIGVARSLDQGATWEFLGIALDEAWHLSYPFVFKYENEIYMMPEGNKKKELRLYRATKFPLEWTLEKVLIDKPLIDSSLVQYDGLWWLFASDFTRHGIEKNAELEIRYSNSPLGPWSEHKQNPIYRSDKSLGARNGGRLFIFEGSLYRPGQDCSGTYGRKVKLYKIEKLTKEEYKEVPVNLGIEEAKKGRNAWNGMRYHHIDAQQLASGGWVAVMDGDRVPSGDSTRRSLFGYMGFLVAVALVTFVGFVKGAISCYIPPSFWVPLTRRSELSRILPVHRFNLKIRRYSTSIGRNISATKARLSEKTWSNTLFFCVIALIGIVNVCIAVHFLLGGNGAEEAYTHQGQHSQFTMVTMTYEARLWNLKLFVEHYSRCESVREIVVVWNKGNHPTSDAFDSTVPVRIRVEEINSLNNRFRGDPLIKTRAVLELDDDIMMTCSDVEKGFKVWREHPERMVGFYPRMIDGDPLQYRNERYARGKKGYNLILTGAAFMDSEFAFSKYWSQEAKEGRDYVHKNFNCEDLLMNFLYANASSSRTVEYVHPAWAIDTSKLSSVAISRDTQKHYDIRTKCLAKFASIYGPLPQKWLFGMREDGWDK.

3 helical membrane passes run 31 to 51, 378 to 398, and 460 to 480; these read FLVA…WLVV, SLFG…VGFV, and LFFC…VHFL. Residues asparagine 534, 558–563, 579–581, arginine 609, and 665–669 each bind substrate; these read NSLNNR, DDD, and FNCED. A Mn(2+)-binding site is contributed by aspartate 581. The cysteines at positions 667 and 718 are disulfide-linked. The active site involves aspartate 669.

Belongs to the glycosyltransferase 64 family. Requires Mn(2+) as cofactor.

It localises to the membrane. It participates in sphingolipid metabolism. Functionally, essential protein. Glycosyltransferase that mediates the glycosylation of glycosylinositol phosphorylceramides (GIPCs), the major sphingolipids in the plasma membrane; acts as a HexN(Ac)-specific GIPC sugar transferase. Responsible for the glycosylation of a subgroup of GIPCs found in seeds and pollen that contain GlcNAc and GlcN (GlcN(Ac)). Maybe involved in the maintenance of cell-cell adhesion. This is Glucosamine inositolphosphorylceramide transferase 1 from Oryza sativa subsp. indica (Rice).